The following is a 369-amino-acid chain: Queuine tRNA-ribosyltransferase (369 aa).

The active-site Proton acceptor is the D89. Residues 89–93 (DSGGF), D142, Q184, and G211 contribute to the substrate site. The tract at residues 242–248 (GGGSPEL) is RNA binding. D261 serves as the catalytic Nucleophile. The tract at residues 266-270 (TRIAR) is RNA binding; important for wobble base 34 recognition. Zn(2+) contacts are provided by C299, C301, C304, and H330.

It belongs to the queuine tRNA-ribosyltransferase family. In terms of assembly, homodimer. Within each dimer, one monomer is responsible for RNA recognition and catalysis, while the other monomer binds to the replacement base PreQ1. Zn(2+) serves as cofactor.

It catalyses the reaction 7-aminomethyl-7-carbaguanine + guanosine(34) in tRNA = 7-aminomethyl-7-carbaguanosine(34) in tRNA + guanine. The protein operates within tRNA modification; tRNA-queuosine biosynthesis. Functionally, catalyzes the base-exchange of a guanine (G) residue with the queuine precursor 7-aminomethyl-7-deazaguanine (PreQ1) at position 34 (anticodon wobble position) in tRNAs with GU(N) anticodons (tRNA-Asp, -Asn, -His and -Tyr). Catalysis occurs through a double-displacement mechanism. The nucleophile active site attacks the C1' of nucleotide 34 to detach the guanine base from the RNA, forming a covalent enzyme-RNA intermediate. The proton acceptor active site deprotonates the incoming PreQ1, allowing a nucleophilic attack on the C1' of the ribose to form the product. After dissociation, two additional enzymatic reactions on the tRNA convert PreQ1 to queuine (Q), resulting in the hypermodified nucleoside queuosine (7-(((4,5-cis-dihydroxy-2-cyclopenten-1-yl)amino)methyl)-7-deazaguanosine). This is Queuine tRNA-ribosyltransferase from Thermotoga sp. (strain RQ2).